The primary structure comprises 578 residues: 15-cis-phytoene desaturase, chloroplastic/chromoplastic (578 aa).

A chloroplast and chromoplast-targeting transit peptide spans 1 to 87 (MDTGCLSSMN…PLENTINFLE (87 aa)). FAD is bound by residues Ala-115, 134 to 135 (EA), Lys-142, 159 to 160 (HI), and Tyr-165. Residue Arg-300 participates in substrate binding. The FAD site is built by Ile-342 and Asp-531. Ala-539 serves as a coordination point for substrate. Residue Met-541 participates in FAD binding.

It belongs to the carotenoid/retinoid oxidoreductase family. In terms of assembly, homotetramer. Homotetramer is the active form of the enzyme. Requires FAD as cofactor.

It localises to the plastid. Its subcellular location is the chloroplast. The protein localises to the chromoplast. The protein resides in the membrane. The catalysed reaction is 2 a plastoquinone + 15-cis-phytoene = 9,9',15-tri-cis-zeta-carotene + 2 a plastoquinol. The protein operates within carotenoid biosynthesis; lycopene biosynthesis. Inhibited by the herbicide norflurazon (NFZ). Its function is as follows. Converts phytoene into zeta-carotene via the intermediary of phytofluene by the symmetrical introduction of two double bonds at the C-11 and C-11' positions of phytoene with a concomitant isomerization of two neighboring double bonds at the C9 and C9' positions from trans to cis. Active with decylplastoquinone (DPQ) as substrate. Also active with other benzoquinones, which are strongly preferred over naphthoquinones as substrates. The sequence is that of 15-cis-phytoene desaturase, chloroplastic/chromoplastic (PDS1) from Oryza sativa subsp. indica (Rice).